A 199-amino-acid polypeptide reads, in one-letter code: Pre T-cell antigen receptor alpha (199 aa).

The N-terminal stretch at 1-16 (MARTWLLLFLGLRCQA) is a signal peptide. Over 17–155 (LPSGIAGTPF…RQVLRLSVLR (139 aa)) the chain is Extracellular. Cysteine 47 and cysteine 107 are joined by a disulfide. 2 N-linked (GlcNAc...) asparagine glycosylation sites follow: asparagine 67 and asparagine 117. Positions 117–139 (NRSTHPLQLSGEEASTDRTCPQE) are disordered. The chain crosses the membrane as a helical span at residues 156–176 (LLLFKLLLLDVFLTCSRLCVL). Residues 177 to 199 (AGQHLLPPPSSKQAPASTHQSWT) lie on the Cytoplasmic side of the membrane.

Heterodimer with TCRB; disulfide linked. This heterodimer assembles with CD3 proteins into a signaling-competent pre-T-cell receptor complex. Interacts with RHBDD1. In terms of tissue distribution, found in CD45+ but not in the CD45- fetal liver cells.

The protein localises to the membrane. It localises to the cell membrane. Component of the pre-T-cell receptor complex (composed of PTCRA, TCRB and the CD3 complex) that has a crucial role in early T-cell development, particularly alpha-beta T cell differentiation. The protein is Pre T-cell antigen receptor alpha of Rattus norvegicus (Rat).